A 312-amino-acid polypeptide reads, in one-letter code: Pyridoxal kinase (312 aa).

The residue at position 1 (Met1) is an N-acetylmethionine. Pyridoxal-binding residues include Ser12 and Thr47. Position 47 (Thr47) interacts with pyridoxal 5'-phosphate. Position 59 is a phosphoserine (Ser59). Asp113 is a binding site for ATP. Asp113 provides a ligand contact to Na(+). Position 118 (Asp118) interacts with Mg(2+). Thr148 provides a ligand contact to Na(+). ATP is bound at residue 150-153 (NQFE). At Ser164 the chain carries Phosphoserine. Thr186 is a binding site for Na(+). Residue 186-187 (TS) participates in ATP binding. Ser213 carries the post-translational modification Phosphoserine. Residues 226–228 (VEA) and Thr233 each bind ATP. Pyridoxal 5'-phosphate is bound at residue 234 to 235 (GD). Asp235 serves as the catalytic Proton acceptor. Ser285 is modified (phosphoserine).

This sequence belongs to the pyridoxine kinase family. In terms of assembly, homodimer. Zn(2+) is required as a cofactor. Mg(2+) serves as cofactor.

It localises to the cytoplasm. The protein resides in the cytosol. It catalyses the reaction pyridoxal + ATP = pyridoxal 5'-phosphate + ADP + H(+). The enzyme catalyses pyridoxamine + ATP = pyridoxamine 5'-phosphate + ADP + H(+). It carries out the reaction pyridoxine + ATP = pyridoxine 5'-phosphate + ADP + H(+). Its pathway is cofactor metabolism; pyridoxal 5'-phosphate salvage; pyridoxal 5'-phosphate from pyridoxal: step 1/1. It functions in the pathway cofactor metabolism; pyridoxal 5'-phosphate salvage; pyridoxine 5'-phosphate from pyridoxine: step 1/1. The protein operates within cofactor metabolism; pyridoxal 5'-phosphate salvage; pyridoxamine 5'-phosphate from pyridoxamine: step 1/1. With respect to regulation, activity is increased in the presence of K(+)or Na(+). Catalyzes the phosphorylation of the dietary vitamin B6 vitamers pyridoxal (PL), pyridoxine (PN) and pyridoxamine (PM) to form pyridoxal 5'-phosphate (PLP), pyridoxine 5'-phosphate (PNP) and pyridoxamine 5'-phosphate (PMP), respectively. PLP is the active form of vitamin B6, and acts as a cofactor for over 140 different enzymatic reactions. The chain is Pyridoxal kinase from Mus musculus (Mouse).